Here is a 122-residue protein sequence, read N- to C-terminus: Large ribosomal subunit protein uL14 (122 aa).

It belongs to the universal ribosomal protein uL14 family. Part of the 50S ribosomal subunit. Forms a cluster with proteins L3 and L19. In the 70S ribosome, L14 and L19 interact and together make contacts with the 16S rRNA in bridges B5 and B8.

In terms of biological role, binds to 23S rRNA. Forms part of two intersubunit bridges in the 70S ribosome. This chain is Large ribosomal subunit protein uL14, found in Exiguobacterium sibiricum (strain DSM 17290 / CCUG 55495 / CIP 109462 / JCM 13490 / 255-15).